Consider the following 898-residue polypeptide: Alanine--tRNA ligase (898 aa).

4 residues coordinate Zn(2+): His564, His568, Cys682, and His686.

Belongs to the class-II aminoacyl-tRNA synthetase family. It depends on Zn(2+) as a cofactor.

It is found in the cytoplasm. The catalysed reaction is tRNA(Ala) + L-alanine + ATP = L-alanyl-tRNA(Ala) + AMP + diphosphate. Its function is as follows. Catalyzes the attachment of alanine to tRNA(Ala) in a two-step reaction: alanine is first activated by ATP to form Ala-AMP and then transferred to the acceptor end of tRNA(Ala). Also edits incorrectly charged Ser-tRNA(Ala) and Gly-tRNA(Ala) via its editing domain. This is Alanine--tRNA ligase from Beijerinckia indica subsp. indica (strain ATCC 9039 / DSM 1715 / NCIMB 8712).